The sequence spans 255 residues: Imidazole glycerol phosphate synthase subunit HisF (255 aa).

Catalysis depends on residues Asp-11 and Asp-130.

It belongs to the HisA/HisF family. As to quaternary structure, heterodimer of HisH and HisF.

It is found in the cytoplasm. It catalyses the reaction 5-[(5-phospho-1-deoxy-D-ribulos-1-ylimino)methylamino]-1-(5-phospho-beta-D-ribosyl)imidazole-4-carboxamide + L-glutamine = D-erythro-1-(imidazol-4-yl)glycerol 3-phosphate + 5-amino-1-(5-phospho-beta-D-ribosyl)imidazole-4-carboxamide + L-glutamate + H(+). Its pathway is amino-acid biosynthesis; L-histidine biosynthesis; L-histidine from 5-phospho-alpha-D-ribose 1-diphosphate: step 5/9. IGPS catalyzes the conversion of PRFAR and glutamine to IGP, AICAR and glutamate. The HisF subunit catalyzes the cyclization activity that produces IGP and AICAR from PRFAR using the ammonia provided by the HisH subunit. The polypeptide is Imidazole glycerol phosphate synthase subunit HisF (Maricaulis maris (strain MCS10) (Caulobacter maris)).